Here is a 308-residue protein sequence, read N- to C-terminus: Olfactory receptor 5H8 (308 aa).

At 1–28 (MDDENATLLTEFVLTGLTYQSEWKIPLF) the chain is on the extracellular side. The helical transmembrane segment at 29–49 (LAFLVIYLITIMANLGLIAVI) threads the bilayer. Topologically, residues 50–56 (WKDSHLH) are cytoplasmic. A helical membrane pass occupies residues 57–77 (IPMYLFLGSLAFVDAWLSSSV). Residues 78 to 98 (TPKMLISFLAKSMIISVSECK) lie on the Extracellular side of the membrane. Cys-97 and Cys-179 are disulfide-bonded. The helical transmembrane segment at 99-119 (IQFFSFGISGTTECFLLATMA) threads the bilayer. Residues 120-133 (YDRYVAICKPLLYP) lie on the Cytoplasmic side of the membrane. A helical transmembrane segment spans residues 134-154 (VIMTNGLCIWLLVLSFIGGFL). At 155-195 (HALIHEGILFRLTFCNSNIIHHFYCDIIPLLKISCTDPSIN) the chain is on the extracellular side. Residues 196–216 (FLMLFILSGSIQVFTILTVLV) traverse the membrane as a helical segment. Topologically, residues 217–238 (SYTFVLFTILKKKAKDIRKAFS) are cytoplasmic. The chain crosses the membrane as a helical span at residues 239-259 (TCGAHLLSVSLYYGPLLFMYV). Over 260-270 (HPASPQADDQD) the chain is Extracellular. Residues 271-291 (MVESLFYTVIIPFLNPIIYSL) traverse the membrane as a helical segment. The Cytoplasmic segment spans residues 292-308 (RNKQVIDSLTKTLKGNV).

It belongs to the G-protein coupled receptor 1 family.

The protein localises to the cell membrane. Its function is as follows. Odorant receptor. The polypeptide is Olfactory receptor 5H8 (Homo sapiens (Human)).